An 804-amino-acid polypeptide reads, in one-letter code: Ion-translocating oxidoreductase complex subunit C (804 aa).

2 consecutive 4Fe-4S ferredoxin-type domains span residues 366-397 and 407-436; these read SEMG…QQLY and KARA…VQYY. Residues cysteine 377, cysteine 380, cysteine 383, cysteine 387, cysteine 416, cysteine 419, cysteine 422, and cysteine 426 each contribute to the [4Fe-4S] cluster site. Disordered stretches follow at residues 466 to 532 and 567 to 804; these read RLER…EVRV and KAAQ…MQED. 7 stretches are compositionally biased toward low complexity: residues 484–495, 567–582, 592–619, 629–660, 668–693, 706–731, and 744–769; these read SVASSDAGAIAA, KAAQ…APQQ, AAVA…EAPQ, KAAV…QQSA, and AAVA…ATEA.

This sequence belongs to the 4Fe4S bacterial-type ferredoxin family. RnfC subfamily. As to quaternary structure, the complex is composed of six subunits: RnfA, RnfB, RnfC, RnfD, RnfE and RnfG. The cofactor is [4Fe-4S] cluster.

Its subcellular location is the cell inner membrane. Functionally, part of a membrane-bound complex that couples electron transfer with translocation of ions across the membrane. In Erwinia tasmaniensis (strain DSM 17950 / CFBP 7177 / CIP 109463 / NCPPB 4357 / Et1/99), this protein is Ion-translocating oxidoreductase complex subunit C.